The sequence spans 193 residues: 3-isopropylmalate dehydratase small subunit (193 aa).

Belongs to the LeuD family. LeuD type 1 subfamily. As to quaternary structure, heterodimer of LeuC and LeuD.

The enzyme catalyses (2R,3S)-3-isopropylmalate = (2S)-2-isopropylmalate. It participates in amino-acid biosynthesis; L-leucine biosynthesis; L-leucine from 3-methyl-2-oxobutanoate: step 2/4. In terms of biological role, catalyzes the isomerization between 2-isopropylmalate and 3-isopropylmalate, via the formation of 2-isopropylmaleate. The sequence is that of 3-isopropylmalate dehydratase small subunit from Bacillus anthracis (strain CDC 684 / NRRL 3495).